Reading from the N-terminus, the 69-residue chain is Small integral membrane protein 20 (69 aa).

Residues M1 to R8 are Mitochondrial matrix-facing. A helical membrane pass occupies residues T9–F29. The Mitochondrial intermembrane portion of the chain corresponds to R30–K69. F66 is modified (phenylalanine amide).

Component of the MITRAC (mitochondrial translation regulation assembly intermediate of cytochrome c oxidase complex) complex, the core components of this complex being COA3/MITRAC12 and COX14. Interacts with COA3/MITRAC12 and COX4I1. Directly interacts with newly synthesized MT-CO1/COX1. As to expression, highly expressed in the hypothalamus, the spinal cord, and sensory ganglia (at protein level). Also expressed on in the epidermis and dermis layers of the skin (at protein level). Expressed in preadipocytes and adipocytes (at protein level). Expressed in the ovary, specifically in granulosa cells of follicles that have passed the primary stage and in oocytes (at protein level).

The protein resides in the mitochondrion inner membrane. It is found in the secreted. Functionally, component of the MITRAC (mitochondrial translation regulation assembly intermediate of cytochrome c oxidase complex) complex, that regulates cytochrome c oxidase assembly. Promotes the progression of complex assembly after the association of MT-CO1/COX1 with COX4I1 and COX6C. Chaperone-like assembly factor required to stabilize newly synthesized MT-CO1/COX1 and to prevent its premature turnover. Peptide involved in a broad spectrum of regulatory functions. Is a ligand for GPR173. As part of the reproductive cycle, it regulates gonadotropin-releasing hormone (GnRH) signaling in the hypothalamus and pituitary gland which augments the release of luteinizing hormone. More specifically, it regulates the expression of transcription factors CEBPB and POU2F1/OCT1 through the cAMP-PKA signaling pathway, which subsequently regulate the expression of GNRHR and KISS1. Plays a protective role in memory retention through activation of GNRHR. Regulates the secretion of AVP by hypothalamic neurons. Plays a role in the transduction of the itch sensation. Induces anxiolytic effects, reducing behavior associated with anxiety. Regulates food intake as well as satiation and satiety by increasing Nucb2 expression in neurons. In the ovary, it regulates follicular growth by stimulating granulosa cell proliferation by increasing the expression of GPR173, CREB1, CYP19A1, KITLG, FSHR, and LHCGR. It also increases the production of estradiol (E2). In the heart, it regulates contractility and relaxation by activating the AKT1-NOS3 and MAPK1-MAPK3 signaling pathways. It also plays a cardioprotective role during ischemia, where it activates the SAFE and RISK pathways. Stimulates the proliferation and differentiation of preadipocytes. In pancreatic islet cells, it induces proliferation of islet cells as well as the production of INS through activation of the MAPK1-MAPK3 signaling pathways. The chain is Small integral membrane protein 20 from Mus musculus (Mouse).